Consider the following 465-residue polypeptide: Endo-1,3-1,4-beta-glycanase ExsH (465 aa).

Hemolysin-type calcium-binding repeat units lie at residues 33 to 50, 105 to 122, and 123 to 140; these read HGTA…VNVT, FGNE…TQTI, and DGRG…ADTF. The region spanning 206 to 462 is the GH16 domain; that stretch reads AHQFRLSLDR…YIKAYSLDAD (257 aa). Glu-349 serves as the catalytic Nucleophile. Catalysis depends on Glu-354, which acts as the Proton donor.

This sequence belongs to the glycosyl hydrolase 16 family.

Its subcellular location is the secreted. Its pathway is glycan metabolism; exopolysaccharide biosynthesis. Its function is as follows. Cleaves high molecular weight succinoglycan to yield LMW succinoglycan. Dynamically regulates the molecular weight distribution of succinoglycan by cleaving nascent succinoglycan only during a limited period after its synthesis, perhaps before it undergoes a time-dependent change in its conformation or aggregation state. This Rhizobium meliloti (strain 1021) (Ensifer meliloti) protein is Endo-1,3-1,4-beta-glycanase ExsH (exsH).